Here is a 322-residue protein sequence, read N- to C-terminus: Replication factor C small subunit (322 aa).

Gly46–Thr53 is a binding site for ATP.

This sequence belongs to the activator 1 small subunits family. RfcS subfamily. As to quaternary structure, heteromultimer composed of small subunits (RfcS) and large subunits (RfcL).

Its function is as follows. Part of the RFC clamp loader complex which loads the PCNA sliding clamp onto DNA. In Methanoculleus marisnigri (strain ATCC 35101 / DSM 1498 / JR1), this protein is Replication factor C small subunit.